A 226-amino-acid polypeptide reads, in one-letter code: Pyridoxal 5'-phosphate synthase subunit PdxT (226 aa).

60–62 (GES) is an L-glutamine binding site. Catalysis depends on cysteine 92, which acts as the Nucleophile. L-glutamine contacts are provided by residues arginine 121 and 150–151 (IR). Active-site charge relay system residues include histidine 191 and glutamate 193.

This sequence belongs to the glutaminase PdxT/SNO family. As to quaternary structure, in the presence of PdxS, forms a dodecamer of heterodimers. Only shows activity in the heterodimer.

The catalysed reaction is aldehydo-D-ribose 5-phosphate + D-glyceraldehyde 3-phosphate + L-glutamine = pyridoxal 5'-phosphate + L-glutamate + phosphate + 3 H2O + H(+). It carries out the reaction L-glutamine + H2O = L-glutamate + NH4(+). Its pathway is cofactor biosynthesis; pyridoxal 5'-phosphate biosynthesis. Functionally, catalyzes the hydrolysis of glutamine to glutamate and ammonia as part of the biosynthesis of pyridoxal 5'-phosphate. The resulting ammonia molecule is channeled to the active site of PdxS. This chain is Pyridoxal 5'-phosphate synthase subunit PdxT, found in Nocardia farcinica (strain IFM 10152).